Consider the following 430-residue polypeptide: Signal recognition particle protein (430 aa).

GTP is bound by residues 105–112, 187–191, and 245–248; these read GLQGSGKT, DTAGR, and TKLD.

Belongs to the GTP-binding SRP family. SRP54 subfamily. In terms of assembly, part of the signal recognition particle protein translocation system, which is composed of SRP and FtsY.

Its subcellular location is the cytoplasm. The enzyme catalyses GTP + H2O = GDP + phosphate + H(+). In terms of biological role, involved in targeting and insertion of nascent membrane proteins into the cytoplasmic membrane. Binds to the hydrophobic signal sequence of the ribosome-nascent chain (RNC) as it emerges from the ribosomes. The SRP-RNC complex is then targeted to the cytoplasmic membrane where it interacts with the SRP receptor FtsY. This chain is Signal recognition particle protein, found in Thermus aquaticus.